A 375-amino-acid polypeptide reads, in one-letter code: Acetylornithine aminotransferase (375 aa).

Pyridoxal 5'-phosphate-binding positions include 102 to 103 and Phe129; that span reads GA. Arg132 contributes to the N(2)-acetyl-L-ornithine binding site. Pyridoxal 5'-phosphate is bound at residue 214 to 217; the sequence is DEVQ. Lys243 carries the post-translational modification N6-(pyridoxal phosphate)lysine. Ser271 contributes to the N(2)-acetyl-L-ornithine binding site. Position 272 (Thr272) interacts with pyridoxal 5'-phosphate.

Belongs to the class-III pyridoxal-phosphate-dependent aminotransferase family. ArgD subfamily. As to quaternary structure, homodimer. Pyridoxal 5'-phosphate serves as cofactor.

Its subcellular location is the cytoplasm. It carries out the reaction N(2)-acetyl-L-ornithine + 2-oxoglutarate = N-acetyl-L-glutamate 5-semialdehyde + L-glutamate. It functions in the pathway amino-acid biosynthesis; L-arginine biosynthesis; N(2)-acetyl-L-ornithine from L-glutamate: step 4/4. This Archaeoglobus fulgidus (strain ATCC 49558 / DSM 4304 / JCM 9628 / NBRC 100126 / VC-16) protein is Acetylornithine aminotransferase.